An 85-amino-acid polypeptide reads, in one-letter code: Large ribosomal subunit protein bL27 (85 aa).

Positions 1-20 (MAHKKAGGSTRNGRDSEAKR) are disordered.

This sequence belongs to the bacterial ribosomal protein bL27 family.

This chain is Large ribosomal subunit protein bL27, found in Escherichia coli O139:H28 (strain E24377A / ETEC).